A 609-amino-acid polypeptide reads, in one-letter code: Glutamine--fructose-6-phosphate aminotransferase [isomerizing] (609 aa).

C2 functions as the Nucleophile; for GATase activity in the catalytic mechanism. The 216-residue stretch at 2–217 folds into the Glutamine amidotransferase type-2 domain; that stretch reads CGIVGAIAGR…DGDTAEIRRD (216 aa). SIS domains lie at 285 to 425 and 458 to 599; these read AESV…LRGA and WAEC…VDKP. Catalysis depends on K604, which acts as the For Fru-6P isomerization activity.

Homodimer.

The protein resides in the cytoplasm. It catalyses the reaction D-fructose 6-phosphate + L-glutamine = D-glucosamine 6-phosphate + L-glutamate. Functionally, catalyzes the first step in hexosamine metabolism, converting fructose-6P into glucosamine-6P using glutamine as a nitrogen source. The sequence is that of Glutamine--fructose-6-phosphate aminotransferase [isomerizing] from Xylella fastidiosa (strain 9a5c).